The following is a 391-amino-acid chain: tRNA (cytosine(38)-C(5))-methyltransferase (391 aa).

Positions 4-391 constitute an SAM-dependent MTase C5-type domain; that stretch reads LRVLELYSGV…VAKLIKILYE (388 aa). Residues 13-15, aspartate 34, 57-58, and serine 76 contribute to the S-adenosyl-L-methionine site; these read VGG and IE. The active site involves cysteine 79. An S-adenosyl-L-methionine-binding site is contributed by serine 376.

Belongs to the class I-like SAM-binding methyltransferase superfamily. C5-methyltransferase family. Ubiquitous. Higher expression in testis, ovary and thymus and at much lower levels in spleen, prostate, colon, small intestine, and peripheral blood leukocytes.

It is found in the cytoplasm. The enzyme catalyses cytidine(38) in tRNA + S-adenosyl-L-methionine = 5-methylcytidine(38) in tRNA + S-adenosyl-L-homocysteine + H(+). Its function is as follows. Specifically methylates cytosine 38 in the anticodon loop of tRNA(Asp). Has higher activity on tRNA(Asp) modified with queuosine at position 34. The protein is tRNA (cytosine(38)-C(5))-methyltransferase (TRDMT1) of Homo sapiens (Human).